Here is a 157-residue protein sequence, read N- to C-terminus: Jacalin-related lectin 15 (157 aa).

One can recognise a Jacalin-type lectin domain in the interval 13-152 (ADKLEAKGGN…LTSLGAYFAP (140 aa)).

It belongs to the jacalin lectin family. As to expression, expressed in stems, leaves and flowers. Not detected in roots.

In terms of biological role, confers broad resistance to potexviruses. Inhibits virus accumulation at the cellular level. This is Jacalin-related lectin 15 (JAL15) from Arabidopsis thaliana (Mouse-ear cress).